A 107-amino-acid polypeptide reads, in one-letter code: Iron-binding protein IscA (107 aa).

Fe cation is bound by residues Cys-35, Cys-99, and Cys-101.

Belongs to the HesB/IscA family. Homodimer; may form tetramers and higher multimers. Fe cation serves as cofactor.

Is able to transfer iron-sulfur clusters to apo-ferredoxin. Multiple cycles of [2Fe2S] cluster formation and transfer are observed, suggesting that IscA acts catalytically. Recruits intracellular free iron so as to provide iron for the assembly of transient iron-sulfur cluster in IscU in the presence of IscS, L-cysteine and the thioredoxin reductase system TrxA/TrxB. The sequence is that of Iron-binding protein IscA from Xenorhabdus nematophila (strain ATCC 19061 / DSM 3370 / CCUG 14189 / LMG 1036 / NCIMB 9965 / AN6).